The primary structure comprises 385 residues: MSWQQRVDDALTARRATDTLRRRYVVSQGAGRWLVANGRQYLNFSSNDYLGLSQHPQIIRAWQQAAIRFGVGSGGSGHISGYSVAHQALEEELAQWLGYPRALLFISGFAANQAVITALMKKNDRIVADRLSHASLLEAANLSPAQLRRFIHNDTQHLSRLLQSPCVGQQLVVTEGVYSMDGDSAPLAEIQHIARRHHAWLLVDDAHGIGVTGDEGRGTCWQRGVKPELLVVTFGKGFGVSGAAVLCSESVADYLLQFARHLVYSTSMPPAQAQALSASLAVIRSDEGGERREKLAALVQRFRAGVNASRFTLLNAHSAIQPLIVGDNSRALRLAEALRQQGCWAMAIRPPTVPVGTARLRLTLTQAHEACDIDRLLEVLHGTGE.

Position 21 (R21) interacts with substrate. Residue 108–109 (GF) participates in pyridoxal 5'-phosphate binding. Position 133 (H133) interacts with substrate. 3 residues coordinate pyridoxal 5'-phosphate: S179, H207, and T233. K236 is modified (N6-(pyridoxal phosphate)lysine). Residue T352 participates in substrate binding.

It belongs to the class-II pyridoxal-phosphate-dependent aminotransferase family. BioF subfamily. Homodimer. Pyridoxal 5'-phosphate is required as a cofactor.

It catalyses the reaction 6-carboxyhexanoyl-[ACP] + L-alanine + H(+) = (8S)-8-amino-7-oxononanoate + holo-[ACP] + CO2. Its pathway is cofactor biosynthesis; biotin biosynthesis. Catalyzes the decarboxylative condensation of pimeloyl-[acyl-carrier protein] and L-alanine to produce 8-amino-7-oxononanoate (AON), [acyl-carrier protein], and carbon dioxide. The protein is 8-amino-7-oxononanoate synthase of Salmonella agona (strain SL483).